A 350-amino-acid polypeptide reads, in one-letter code: Quinolinate phosphoribosyltransferase [decarboxylating] 1b (350 aa).

Residues Arg-141, Thr-172–Lys-174, Arg-196, Lys-206, Glu-239, Asp-266, Ser-298–Asn-300, and Ser-319–Ala-321 contribute to the substrate site.

This sequence belongs to the NadC/ModD family.

The catalysed reaction is nicotinate beta-D-ribonucleotide + CO2 + diphosphate = quinolinate + 5-phospho-alpha-D-ribose 1-diphosphate + 2 H(+). Its pathway is alkaloid biosynthesis; nicotine biosynthesis. It participates in cofactor biosynthesis; NAD(+) biosynthesis; nicotinate D-ribonucleotide from quinolinate: step 1/1. Involved in the biosynthesis of pyridine alkaloid natural products, leading mainly to the production of anabasine, anatabine, nicotine and nornicotine, effective deterrents against herbivores with antiparasitic and pesticide properties (neurotoxins); nornicotine serves as the precursor in the synthesis of the carcinogen compound N'-nitrosonornicotine (NNN). Involved in the catabolism of quinolinic acid (QA). The sequence is that of Quinolinate phosphoribosyltransferase [decarboxylating] 1b from Nicotiana tabacum (Common tobacco).